Reading from the N-terminus, the 333-residue chain is MQISVNEFLTPRHIDVQEVSPTRAKITLEPLERGFGHTLGNALRRILLSSMPGCAVVEAEIDGVLHEYSAIEGVQEDVIEILLNLKGLAIKLHGRDEVTLTLAKKGPGVVTAADIQLDHDVEIVNGDHVIANLAANGSLNMKLTVARGRGYEPADARQSDEDESRSIGRLQLDASFSPVRRVAYVVENARVEQRTNLDKLVIDLETNGTLDPEEAIRRAATILQQQLAAFVDLKGDSEPVVVEQEDEIDPILLRPVDDLELTVRSANCLKAENIYYIGDLIQRTEVELLKTPNLGKKSLTEIKDVLASRGLSLGMRLDNWPPASLKKDDKATA.

Residues 1-234 form an alpha N-terminal domain (alpha-NTD) region; it reads MQISVNEFLT…QQLAAFVDLK (234 aa). The tract at residues 248–333 is alpha C-terminal domain (alpha-CTD); sequence IDPILLRPVD…SLKKDDKATA (86 aa).

This sequence belongs to the RNA polymerase alpha chain family. As to quaternary structure, homodimer. The RNAP catalytic core consists of 2 alpha, 1 beta, 1 beta' and 1 omega subunit. When a sigma factor is associated with the core the holoenzyme is formed, which can initiate transcription.

It carries out the reaction RNA(n) + a ribonucleoside 5'-triphosphate = RNA(n+1) + diphosphate. DNA-dependent RNA polymerase catalyzes the transcription of DNA into RNA using the four ribonucleoside triphosphates as substrates. The chain is DNA-directed RNA polymerase subunit alpha from Ectopseudomonas mendocina (strain ymp) (Pseudomonas mendocina).